The sequence spans 195 residues: Interferon omega-1 (195 aa).

The signal sequence occupies residues 1–23 (MAFSVSSLMALVVISSSPVSSMS). 2 cysteine pairs are disulfide-bonded: C24–C122 and C52–C162. N101 carries N-linked (GlcNAc...) asparagine glycosylation.

Belongs to the alpha/beta interferon family.

Its subcellular location is the secreted. This chain is Interferon omega-1, found in Equus caballus (Horse).